Reading from the N-terminus, the 951-residue chain is MEKTYNPTSIEQDLYKTWEEQGYFKPHGDTSKESYSIMIPPPNVTGSLHMGHAFQDTIMDTLIRCERMKGKNTLWQVGTDHAGIATQMVVERKIAAEEGKTKHDYGREAFIDKIWEWKGESGGTITKQLRRLGASVDWDRERFTMDDGLSNAVQEVFVRLYEDDLIYRGKRLVNWDPKLHTAISDLEVENKDTKGHMWHFRYPLADGVKTADGKDYIVVATTRPETMLGDTGVAVNPEDPRYQDLIGKDIILPIVDRRIPIVGDEHADMEKGTGCVKITPAHDFNDYEVGKRHQLPMINILTFDANIRDAAEVFTTNGEPSDAYGTELPAKYHGMERFAARKAIVAEFDELGLLEEVKDHDLQVPYGDRGGVVIEPMLTDQWYVRTAPLAKTAVEAVENGDIQFVPKQYENMYFSWMRDVQDWCISRQLWWGHRIPAWYDNQGNVYVGRSEEEVRQNHNLESVIELHQDEDVLDTWFSSALWTFGTQGWPEQTDDLKVFHPSDVLVTGFDIIFFWVARMIMMTMHFVKDENGKPQVPFKTVYVTGLIRDENGDKMSKSKGNVLDPIDMIDGIDLESLVEKRTGNMMQPQLAAKIEKNTRKTFENGIEAYGTDALRFTLAAMASTGRDINWDMKRLEGYRNFCNKLWNASRYVMMNTEEQDCGFGAGEIEYSLADKWIESQFELAAKAFNNHIDNYRLDMAANTLYEFIWNQFCDWYLELTKPVLWKGTEAQQRGTRRTLITVLEKTLRLAHPVIPYITETIWQSIKPLVDGVEGETIMLQSLPQYDEANFNQEALDDIEWVKAFITSIRNLRAEYDINPGKPLEVMLKADEKDAARLEANKQVLMSLAKLESVRVLAAGEETPACATALVAKSELMIPMAGLIDKDAELARLDKEVAKTQGEIKRIEGKLGNEGFVAKAPEAVIAKEREKLEGYQETLAKLEEQKATIAAL.

A 'HIGH' region motif is present at residues 42–52 (PNVTGSLHMGH). The 'KMSKS' region motif lies at 554-558 (KMSKS). Lys557 lines the ATP pocket. Positions 882-951 (LIDKDAELAR…EEQKATIAAL (70 aa)) form a coiled coil.

This sequence belongs to the class-I aminoacyl-tRNA synthetase family. ValS type 1 subfamily. In terms of assembly, monomer.

The protein localises to the cytoplasm. The enzyme catalyses tRNA(Val) + L-valine + ATP = L-valyl-tRNA(Val) + AMP + diphosphate. In terms of biological role, catalyzes the attachment of valine to tRNA(Val). As ValRS can inadvertently accommodate and process structurally similar amino acids such as threonine, to avoid such errors, it has a 'posttransfer' editing activity that hydrolyzes mischarged Thr-tRNA(Val) in a tRNA-dependent manner. In Vibrio vulnificus (strain CMCP6), this protein is Valine--tRNA ligase.